A 967-amino-acid polypeptide reads, in one-letter code: Sulfite dehydrogenase subunit A (967 aa).

In terms of domain architecture, 4Fe-4S Mo/W bis-MGD-type spans 15–71; sequence VEVKETTCYMCACRCGIRVHLRDGEVRYIDGNPNHPLNKGVICAKGSSGIMKQYSPG. [4Fe-4S] cluster is bound by residues C22, C25, C29, and C57.

Belongs to the prokaryotic molybdopterin-containing oxidoreductase family. As to quaternary structure, forms a heterotrimeric membrane-bound complex composed of a catalytic heterodimer (SoeAB) and a membrane anchor protein (SoeC). [4Fe-4S] cluster serves as cofactor. Mo-bis(molybdopterin guanine dinucleotide) is required as a cofactor.

Its subcellular location is the cell inner membrane. The catalysed reaction is a quinone + sulfite + H2O = a quinol + sulfate. It carries out the reaction a menaquinone + sulfite + H2O = a menaquinol + sulfate. Its function is as follows. Part of the SoeABC complex that catalyzes the oxidation of sulfite to sulfate. In Allochromatium vinosum (strain ATCC 17899 / DSM 180 / NBRC 103801 / NCIMB 10441 / D) (Chromatium vinosum), this protein is Sulfite dehydrogenase subunit A.